A 113-amino-acid chain; its full sequence is Phosphoribosyl-ATP pyrophosphatase (113 aa).

The protein belongs to the PRA-PH family.

The protein resides in the cytoplasm. The enzyme catalyses 1-(5-phospho-beta-D-ribosyl)-ATP + H2O = 1-(5-phospho-beta-D-ribosyl)-5'-AMP + diphosphate + H(+). The protein operates within amino-acid biosynthesis; L-histidine biosynthesis; L-histidine from 5-phospho-alpha-D-ribose 1-diphosphate: step 2/9. The protein is Phosphoribosyl-ATP pyrophosphatase of Janthinobacterium sp. (strain Marseille) (Minibacterium massiliensis).